The following is a 201-amino-acid chain: Peptidyl-tRNA hydrolase (201 aa).

Residue Tyr-15 participates in tRNA binding. His-20 (proton acceptor) is an active-site residue. The tRNA site is built by Tyr-66, Asn-68, and Asn-114.

It belongs to the PTH family. In terms of assembly, monomer.

It is found in the cytoplasm. It catalyses the reaction an N-acyl-L-alpha-aminoacyl-tRNA + H2O = an N-acyl-L-amino acid + a tRNA + H(+). Functionally, hydrolyzes ribosome-free peptidyl-tRNAs (with 1 or more amino acids incorporated), which drop off the ribosome during protein synthesis, or as a result of ribosome stalling. In terms of biological role, catalyzes the release of premature peptidyl moieties from peptidyl-tRNA molecules trapped in stalled 50S ribosomal subunits, and thus maintains levels of free tRNAs and 50S ribosomes. In Burkholderia mallei (strain ATCC 23344), this protein is Peptidyl-tRNA hydrolase.